The sequence spans 175 residues: Co-chaperone protein HscB homolog (175 aa).

The 73-residue stretch at 8 to 80 folds into the J domain; the sequence is DFFSLFGLPR…LNRARYLLQL (73 aa).

Belongs to the HscB family. Interacts with HscA and stimulates its ATPase activity.

Co-chaperone involved in the maturation of iron-sulfur cluster-containing proteins. Seems to help targeting proteins to be folded toward HscA. In Chromobacterium violaceum (strain ATCC 12472 / DSM 30191 / JCM 1249 / CCUG 213 / NBRC 12614 / NCIMB 9131 / NCTC 9757 / MK), this protein is Co-chaperone protein HscB homolog.